Reading from the N-terminus, the 227-residue chain is 2-heptyl-1-hydroxyquinolin-4(1H)-one methyltransferase (227 aa).

It belongs to the methyltransferase superfamily. As to quaternary structure, monomer.

Its subcellular location is the cytoplasm. It catalyses the reaction 2-heptyl-1-hydroxy-4(1H)-quinolinone + S-adenosyl-L-methionine = 2-heptyl-1-methoxy-4(1H)-quinolinone + S-adenosyl-L-homocysteine + H(+). The catalysed reaction is 3-bromo-2-heptyl-1-hydroxy-4(1H)-quinolinone + S-adenosyl-L-methionine = 3-bromo-2-heptyl-1-methoxy-4(1H)-quinolinone + S-adenosyl-L-homocysteine + H(+). Involved in cellular response to chemical stress and may contribute to resistance toward antimicrobial natural compounds as well as drugs. Catalyzes the methylation and detoxification of the P.aeruginosa toxin 2-heptyl-1-hydroxy-4(1H)-quinolinone (HQNO) to 2-heptyl-1-methoxy-4(1H)-quinolinone (HMOQ). Can also methylate 3-bromo-2-heptyl-1-hydroxy-4(1H)-quinolinone, and shows much lower activity with 1-hydroxyquinolin-4(1H)-one, quercetin, 4-hydroxyquinolin-2(1H)-one (DHQ) and 4-hydroxyisoquinolin-1(2H)-one. The sequence is that of 2-heptyl-1-hydroxyquinolin-4(1H)-one methyltransferase from Mycobacteroides abscessus (strain ATCC 19977 / DSM 44196 / CCUG 20993 / CIP 104536 / JCM 13569 / NCTC 13031 / TMC 1543 / L948) (Mycobacterium abscessus).